Reading from the N-terminus, the 93-residue chain is Small ribosomal subunit protein uS19c (93 aa).

The protein belongs to the universal ribosomal protein uS19 family.

The protein localises to the plastid. It localises to the chloroplast. Protein S19 forms a complex with S13 that binds strongly to the 16S ribosomal RNA. The sequence is that of Small ribosomal subunit protein uS19c (rps19-A) from Zea mays (Maize).